Here is a 296-residue protein sequence, read N- to C-terminus: Large ribosomal subunit protein uL15m (296 aa).

Residues 1–21 constitute a mitochondrion transit peptide; that stretch reads MAGPLQGGGARALDLLRGLPR. The tract at residues 22 to 66 is disordered; the sequence is VSLANLKPNPGSKKPERRPRGRRRGRKCGRGHKGERQRGTRPRLG. Over residues 36-52 the composition is skewed to basic residues; sequence PERRPRGRRRGRKCGRG.

It belongs to the universal ribosomal protein uL15 family. In terms of assembly, component of the mitochondrial large ribosomal subunit (mt-LSU). Mature mammalian 55S mitochondrial ribosomes consist of a small (28S) and a large (39S) subunit. The 28S small subunit contains a 12S ribosomal RNA (12S mt-rRNA) and 30 different proteins. The 39S large subunit contains a 16S rRNA (16S mt-rRNA), a copy of mitochondrial valine transfer RNA (mt-tRNA(Val)), which plays an integral structural role, and 52 different proteins.

The protein localises to the mitochondrion. The polypeptide is Large ribosomal subunit protein uL15m (MRPL15) (Homo sapiens (Human)).